The following is a 160-amino-acid chain: Eukaryotic translation initiation factor 5A-2 (160 aa).

The segment covering 1–12 has biased composition (basic and acidic residues); it reads MSDEEHHFESKA. A disordered region spans residues 1–21; the sequence is MSDEEHHFESKADAGASKTFP. Lysine 52 carries the post-translational modification Hypusine.

Belongs to the eIF-5A family. In terms of processing, lys-52 undergoes hypusination, a unique post-translational modification that consists in the addition of a butylamino group from spermidine to lysine side chain, leading to the formation of the unusual amino acid hypusine. eIF-5As are the only known proteins to undergo this modification, which is essential for their function.

Translation factor that promotes translation elongation and termination, particularly upon ribosome stalling at specific amino acid sequence contexts. Binds between the exit (E) and peptidyl (P) site of the ribosome and promotes rescue of stalled ribosome: specifically required for efficient translation of polyproline-containing peptides as well as other motifs that stall the ribosome. Acts as a ribosome quality control (RQC) cofactor by joining the RQC complex to facilitate peptidyl transfer during CAT tailing step. The polypeptide is Eukaryotic translation initiation factor 5A-2 (Solanum lycopersicum (Tomato)).